Reading from the N-terminus, the 120-residue chain is Large ribosomal subunit protein bL20 (120 aa).

The protein belongs to the bacterial ribosomal protein bL20 family.

Binds directly to 23S ribosomal RNA and is necessary for the in vitro assembly process of the 50S ribosomal subunit. It is not involved in the protein synthesizing functions of that subunit. The chain is Large ribosomal subunit protein bL20 from Blochmanniella pennsylvanica (strain BPEN).